The primary structure comprises 357 residues: Peptide chain release factor 1 (357 aa).

Position 234 is an N5-methylglutamine (Gln234). Basic and acidic residues predominate over residues 284–307 (KKQEQRSNDRKQQVGSGDRSERIR). The disordered stretch occupies residues 284-313 (KKQEQRSNDRKQQVGSGDRSERIRTYNFPQ).

This sequence belongs to the prokaryotic/mitochondrial release factor family. In terms of processing, methylated by PrmC. Methylation increases the termination efficiency of RF1.

The protein localises to the cytoplasm. Functionally, peptide chain release factor 1 directs the termination of translation in response to the peptide chain termination codons UAG and UAA. In Borrelia turicatae (strain 91E135), this protein is Peptide chain release factor 1.